The following is a 523-amino-acid chain: Cytochrome P450 52-N1 (523 aa).

A helical membrane pass occupies residues 5–25; that stretch reads AVLGAFAAFLLYMDVLYPFVI. Cys-469 provides a ligand contact to heme.

It belongs to the cytochrome P450 family. It depends on heme as a cofactor.

Its subcellular location is the membrane. It catalyses the reaction an omega-methyl-long-chain fatty acid + reduced [NADPH--hemoprotein reductase] + O2 = an omega-hydroxy-long-chain fatty acid + oxidized [NADPH--hemoprotein reductase] + H2O + H(+). The enzyme catalyses (9Z,12Z)-octadecadienoate + reduced [NADPH--hemoprotein reductase] + O2 = 18-hydroxy-(9Z,12Z)-octadecadienoate + oxidized [NADPH--hemoprotein reductase] + H2O + H(+). The catalysed reaction is (9Z)-octadecenoate + reduced [NADPH--hemoprotein reductase] + O2 = 18-hydroxy-(9Z)-octadecenoate + oxidized [NADPH--hemoprotein reductase] + H2O + H(+). It carries out the reaction hexadecanoate + reduced [NADPH--hemoprotein reductase] + O2 = 16-hydroxyhexadecanoate + oxidized [NADPH--hemoprotein reductase] + H2O + H(+). It catalyses the reaction (9Z)-hexadecenoate + reduced [NADPH--hemoprotein reductase] + O2 = (9Z)-16-hydroxyhexadec-9-enoate + oxidized [NADPH--hemoprotein reductase] + H2O + H(+). The enzyme catalyses octadecanoate + reduced [NADPH--hemoprotein reductase] + O2 = 18-hydroxyoctadecanoate + oxidized [NADPH--hemoprotein reductase] + H2O + H(+). Catalyzes the terminal (at the omega-position) hydroxylation of a fatty acid. Probably involved in alkane metabolism. Linoleic acid is the preferred substrate, but it acts on various other C-16, C-18 and C-20 saturated and unsaturated fatty acids, namely palmitic, palmitoleic, stearic, oleic, alpha-linoleic, arachidonic and myristic acid. This Starmerella bombicola (Yeast) protein is Cytochrome P450 52-N1.